The chain runs to 193 residues: Ion-translocating oxidoreductase complex subunit A (193 aa).

The next 6 helical transmembrane spans lie at 5–25 (LLLL…FLGL), 39–59 (IGMG…SYLI), 63–83 (ILAP…VIAV), 102–122 (VLGI…VALL), 134–154 (IIYG…FSAM), and 171–191 (SIAM…TGLV).

This sequence belongs to the NqrDE/RnfAE family. As to quaternary structure, the complex is composed of six subunits: RnfA, RnfB, RnfC, RnfD, RnfE and RnfG.

Its subcellular location is the cell inner membrane. Functionally, part of a membrane-bound complex that couples electron transfer with translocation of ions across the membrane. This is Ion-translocating oxidoreductase complex subunit A from Aliivibrio salmonicida (strain LFI1238) (Vibrio salmonicida (strain LFI1238)).